The chain runs to 493 residues: Putative trans-acting regulator SP_1800 (493 aa).

The protein belongs to the AtxA/AcpA family.

In Streptococcus pneumoniae serotype 4 (strain ATCC BAA-334 / TIGR4), this protein is Putative trans-acting regulator SP_1800.